An 835-amino-acid polypeptide reads, in one-letter code: Protein translocase subunit SecA (835 aa).

Residues Q85, 103-107 (GEGKT), and D492 contribute to the ATP site. Residues 788–807 (VQGEAVHPSSDGEEAKKKPV) form a disordered region. Residues C819, C821, C830, and C831 each contribute to the Zn(2+) site.

It belongs to the SecA family. As to quaternary structure, monomer and homodimer. Part of the essential Sec protein translocation apparatus which comprises SecA, SecYEG and auxiliary proteins SecDF. Other proteins may also be involved. The cofactor is Zn(2+).

Its subcellular location is the cell membrane. It is found in the cytoplasm. It carries out the reaction ATP + H2O + cellular proteinSide 1 = ADP + phosphate + cellular proteinSide 2.. Part of the Sec protein translocase complex. Interacts with the SecYEG preprotein conducting channel. Has a central role in coupling the hydrolysis of ATP to the transfer of proteins into and across the cell membrane, serving as an ATP-driven molecular motor driving the stepwise translocation of polypeptide chains across the membrane. This Bacillus cereus (strain ATCC 10987 / NRS 248) protein is Protein translocase subunit SecA.